Reading from the N-terminus, the 238-residue chain is Survival of motor neuron-related-splicing factor 30 (238 aa).

The 61-residue stretch at 72–132 (SWKVGDKCMA…KPVEEGRKAK (61 aa)) folds into the Tudor domain. A Nuclear localization signal motif is present at residues 142–160 (KKEMIAQQREYKKKKALKK). Ser-201 carries the phosphoserine modification. The residue at position 219 (Lys-219) is an N6-acetyllysine.

It belongs to the SMN family. In terms of assembly, associates with spliceosomes. Associates with U4/U5/U6 tri-snRNP and with U2 snRNP.

The protein localises to the nucleus speckle. Its subcellular location is the nucleus. It localises to the cajal body. Functionally, involved in spliceosome assembly. In Pongo abelii (Sumatran orangutan), this protein is Survival of motor neuron-related-splicing factor 30 (SMNDC1).